Here is a 143-residue protein sequence, read N- to C-terminus: MAKKIIGFIKLQIPAGKANPSPPVGPALGQRGLNIMEFCKAFNAQTQALEPGLPIPVVITAFADKSFTFVLKTPPATVLIKKAAKIDKGSSKPHTDKVGKITRAQAEDIAKTKMPDLTAADLDAAVRTIAGSARSMGITVEGV.

This sequence belongs to the universal ribosomal protein uL11 family. In terms of assembly, part of the ribosomal stalk of the 50S ribosomal subunit. Interacts with L10 and the large rRNA to form the base of the stalk. L10 forms an elongated spine to which L12 dimers bind in a sequential fashion forming a multimeric L10(L12)X complex. In terms of processing, one or more lysine residues are methylated.

Forms part of the ribosomal stalk which helps the ribosome interact with GTP-bound translation factors. The sequence is that of Large ribosomal subunit protein uL11 from Paraburkholderia xenovorans (strain LB400).